Reading from the N-terminus, the 204-residue chain is Large ribosomal subunit protein eL15 (204 aa).

It belongs to the eukaryotic ribosomal protein eL15 family. As to quaternary structure, component of the large ribosomal subunit.

The protein localises to the cytoplasm. Functionally, component of the large ribosomal subunit. The ribosome is a large ribonucleoprotein complex responsible for the synthesis of proteins in the cell. This Cyprinus carpio (Common carp) protein is Large ribosomal subunit protein eL15 (rpl15).